A 450-amino-acid polypeptide reads, in one-letter code: TATA box-binding protein-associated factor RNA polymerase I subunit A (450 aa).

In terms of assembly, component of the transcription factor SL1/TIF-IB complex, composed of TBP and at least TAF1A, TAF1B, TAF1C and TAF1D. In the complex interacts directly with TBP, TAF1A and TAF1B. Interaction of the SL1/TIF-IB subunits with TBP excludes interaction of TBP with the transcription factor IID (TFIID) subunits. Interacts with UBFT. Interacts with CEBPA (isoform 1 and isoform 4). Part of Pol I pre-initiation complex (PIC), in which Pol I core assembles with RRN3 and promoter-bound UTBF and SL1/TIF-IB complex.

Its subcellular location is the nucleus. It is found in the nucleolus. Its function is as follows. Component of the transcription factor SL1/TIF-IB complex, which is involved in the assembly of the PIC (pre-initiation complex) during RNA polymerase I-dependent transcription. The rate of PIC formation probably is primarily dependent on the rate of association of SL1/TIF-IB with the rDNA promoter. SL1/TIF-IB is involved in stabilization of nucleolar transcription factor 1/UBTF on rDNA. Formation of SL1/TIF-IB excludes the association of TBP with TFIID subunits. This chain is TATA box-binding protein-associated factor RNA polymerase I subunit A (TAF1A), found in Homo sapiens (Human).